The sequence spans 548 residues: Solute carrier family 22 member 7 (548 aa).

The helical transmembrane segment at 21–41 threads the bilayer; sequence VALLALPRVLLPLHFLLPIFL. The N-linked (GlcNAc...) asparagine glycan is linked to Asn-91. Transmembrane regions (helical) follow at residues 146–166, 180–200, 204–224, 234–254, 259–279, 346–366, 376–397, 404–423, 432–452, 466–486, and 493–513; these read AAST…GYLS, VSTL…MFAI, LTGS…LEWL, VLSS…GYLI, WLLL…WWVP, ISLC…GLSL, YQTQ…YLSV, LTQA…RLLV, TVLA…AYLF, MGLT…AALL, and LPKL…LLLP. Phe-441 functions as the Important for glutamate counteranion efflux in the catalytic mechanism. Residues 522–548 form a disordered region; that stretch reads ETIQDVERKSAPTSLQEEEMPMKQVQN.

This sequence belongs to the major facilitator (TC 2.A.1) superfamily. Organic cation transporter (TC 2.A.1.19) family. In terms of tissue distribution, mainly expressed in liver and kidney. In kidney, expressed in proximal tubular cells. Also expressed in pancreas, small intestine, spinal cord, lung, brain and heart. Expressed in fetal liver.

The protein localises to the basolateral cell membrane. It is found in the apical cell membrane. The protein resides in the cell membrane. Its subcellular location is the cytoplasm. It localises to the cytosol. It catalyses the reaction orotate(out) + L-glutamate(in) = orotate(in) + L-glutamate(out). The enzyme catalyses 3',5'-cyclic GMP(in) = 3',5'-cyclic GMP(out). It carries out the reaction GMP(in) = GMP(out). The catalysed reaction is 2'-deoxyguanosine(in) = 2'-deoxyguanosine(out). It catalyses the reaction GDP(in) = GDP(out). The enzyme catalyses guanosine(in) = guanosine(out). It carries out the reaction GTP(in) = GTP(out). The catalysed reaction is 3',5'-cyclic AMP(in) = 3',5'-cyclic AMP(out). It catalyses the reaction creatinine(in) = creatinine(out). The enzyme catalyses prostaglandin E2(out) = prostaglandin E2(in). It carries out the reaction 2-oxoglutarate(in) = 2-oxoglutarate(out). The catalysed reaction is glutarate(in) = glutarate(out). It catalyses the reaction urate(out) = urate(in). The enzyme catalyses estrone 3-sulfate(out) = estrone 3-sulfate(in). It carries out the reaction prostaglandin F2alpha(out) = prostaglandin F2alpha(in). Functions as a Na(+)-independent bidirectional multispecific transporter. Contributes to the renal and hepatic elimination of endogenous organic compounds from the systemic circulation into the urine and bile, respectively. Capable of transporting a wide range of purine and pyrimidine nucleobases, nucleosides and nucleotides, with cGMP, 2'deoxyguanosine and GMP being the preferred substrates. Functions as a pH- and chloride-independent cGMP bidirectional facilitative transporter that can regulate both intracellular and extracellular levels of cGMP and may be involved in cGMP signaling pathways. Mediates orotate/glutamate bidirectional exchange and most likely display a physiological role in hepatic release of glutamate into the blood. Involved in renal secretion and possible reabsorption of creatinine. Able to uptake prostaglandin E2 (PGE2) and may contribute to PGE2 renal excretion. Also transports alpha-ketoglutarate and urate. Apart from the orotate/glutamate exchange, the counterions for the uptake of other SLC22A7/OAT2 substrates remain to be identified. Its function is as follows. Non functional transporter. Functionally, involved in the uptake of prostaglandin F2-alpha (PGF2-alpha). The sequence is that of Solute carrier family 22 member 7 from Homo sapiens (Human).